The primary structure comprises 900 residues: Alpha-actinin-3 (900 aa).

The residue at position 1 (M1) is an N-acetylmethionine. The tract at residues M1 to M26 is disordered. Residues M1 to H260 form an actin-binding region. Residues L10–E24 show a composition bias toward gly residues. 2 consecutive Calponin-homology (CH) domains span residues K44–A148 and T157–A263. 4 Spectrin repeats span residues K287–S397, H407–R512, Q522–E633, and R643–N746. 2 consecutive EF-hand domains span residues E759–D794 and L795–E830. The Ca(2+) site is built by D772, N776, M778, D783, D808, and N810.

This sequence belongs to the alpha-actinin family. As to quaternary structure, homodimer; antiparallel. Also forms heterodimers with ACTN2. Interacts with MYOZ1. Expression restricted to skeletal muscle fast (type 2) fibers (at protein level).

F-actin cross-linking protein which is thought to anchor actin to a variety of intracellular structures. This is a bundling protein. The sequence is that of Alpha-actinin-3 (Actn3) from Mus musculus (Mouse).